We begin with the raw amino-acid sequence, 64 residues long: uncharacterized protein (64 aa).

This is an uncharacterized protein from Dictyostelium discoideum (Social amoeba).